The sequence spans 376 residues: Chaperone protein DnaJ (376 aa).

In terms of domain architecture, J spans 5 to 70; that stretch reads DYYEVLGVAK…QKRAAYDQYG (66 aa). The CR-type zinc-finger motif lies at 136–214; the sequence is GYDTQIRVPS…CHGSGKVKET (79 aa). Zn(2+) is bound by residues Cys-149, Cys-152, Cys-166, Cys-169, Cys-188, Cys-191, Cys-202, and Cys-205. CXXCXGXG motif repeat units lie at residues 149–156, 166–173, 188–195, and 202–209; these read CGVCHGSG, CPTCHGQG, CPKCHGTG, and CVHCHGSG.

It belongs to the DnaJ family. In terms of assembly, homodimer. Zn(2+) serves as cofactor.

Its subcellular location is the cytoplasm. Participates actively in the response to hyperosmotic and heat shock by preventing the aggregation of stress-denatured proteins and by disaggregating proteins, also in an autonomous, DnaK-independent fashion. Unfolded proteins bind initially to DnaJ; upon interaction with the DnaJ-bound protein, DnaK hydrolyzes its bound ATP, resulting in the formation of a stable complex. GrpE releases ADP from DnaK; ATP binding to DnaK triggers the release of the substrate protein, thus completing the reaction cycle. Several rounds of ATP-dependent interactions between DnaJ, DnaK and GrpE are required for fully efficient folding. Also involved, together with DnaK and GrpE, in the DNA replication of plasmids through activation of initiation proteins. The chain is Chaperone protein DnaJ from Burkholderia pseudomallei (strain 1710b).